The chain runs to 371 residues: tRNA-specific 2-thiouridylase MnmA (371 aa).

ATP is bound by residues 12 to 19 (GMSGGVDS) and Met-38. Residues 98 to 100 (NPD) are interaction with target base in tRNA. Residue Cys-103 is the Nucleophile of the active site. An intrachain disulfide couples Cys-103 to Cys-200. Gly-128 provides a ligand contact to ATP. Residues 150-152 (KDQ) are interaction with tRNA. Cys-200 (cysteine persulfide intermediate) is an active-site residue. The interval 312-313 (RY) is interaction with tRNA.

The protein belongs to the MnmA/TRMU family. As to quaternary structure, interacts with TusE.

Its subcellular location is the cytoplasm. It catalyses the reaction S-sulfanyl-L-cysteinyl-[protein] + uridine(34) in tRNA + AH2 + ATP = 2-thiouridine(34) in tRNA + L-cysteinyl-[protein] + A + AMP + diphosphate + H(+). Catalyzes the 2-thiolation of uridine at the wobble position (U34) of tRNA(Lys), tRNA(Glu) and tRNA(Gln), leading to the formation of s(2)U34, the first step of tRNA-mnm(5)s(2)U34 synthesis. Sulfur is provided by IscS, via a sulfur-relay system. Binds ATP and its substrate tRNAs. The chain is tRNA-specific 2-thiouridylase MnmA from Yersinia pseudotuberculosis serotype O:1b (strain IP 31758).